The primary structure comprises 2427 residues: Interferon-induced very large GTPase 1 (2427 aa).

A VLIG-type G domain is found at 1485–1726; it reads DKRLFVLSVL…KISDFKFRVQ (242 aa). Residues 1495–1502, 1548–1551, and 1625–1628 contribute to the GTP site; these read GLQSSGKS, DTEG, and TAKD.

It belongs to the TRAFAC class dynamin-like GTPase superfamily. Very large inducible GTPase (VLIG) family. In terms of tissue distribution, widely expressed. Expressed at low basal level in lung, heart, thymus and spleen; at still lower level in liver, ovary, kidney and brain. Expressed at very weak level in testis. Undetectable in embryo.

It localises to the cytoplasm. Its subcellular location is the cytosol. It is found in the nucleus. The polypeptide is Interferon-induced very large GTPase 1 (Gvin1) (Mus musculus (Mouse)).